Here is a 1064-residue protein sequence, read N- to C-terminus: Lysine-specific demethylase 4A (1064 aa).

Position 2 is an N-acetylalanine (alanine 2). The 43-residue stretch at 14–56 (IMTFYPTMEEFRNFSRYIAYIESQGAHRAGLAKVVPPKEWKPR) folds into the JmjN domain. 2-oxoglutarate is bound at residue tyrosine 132. Residues 142–308 (EKHVDEWNIG…YGKQAVLCSC (167 aa)) enclose the JmjC domain. Residues histidine 188 and glutamate 190 each contribute to the Fe cation site. Positions 198 and 206 each coordinate 2-oxoglutarate. 2 residues coordinate Zn(2+): cysteine 234 and histidine 240. Lysine 241 is a binding site for 2-oxoglutarate. Residue histidine 276 coordinates Fe cation. Positions 306 and 308 each coordinate Zn(2+). Disordered regions lie at residues 358-384 (ELPPRAGNEEECPEDDMEGVEDGEEGD), 501-537 (FSGSKKKSSSSLGSGSSRDSVSSDSETSEPLSCRAQG), and 616-642 (SDDETSEQLTPEEEAEETEAWAKPLSQ). Positions 366–382 (EEECPEDDMEGVEDGEE) are enriched in acidic residues. Residues 509 to 532 (SSSLGSGSSRDSVSSDSETSEPLS) show a composition bias toward low complexity. The residue at position 523 (serine 523) is a Phosphoserine. Positions 597–638 (RQPLSKLPRHHPLVLQECVSDDETSEQLTPEEEAEETEAWAK) are interaction with NCOR1. Over residues 616-634 (SDDETSEQLTPEEEAEETE) the composition is skewed to acidic residues. The PHD-type 1 zinc finger occupies 709–767 (MCFTSTGCGTDINLSTPYLEEDGTSILVSCKKCSVRVHASCYGVPPAKASEDWMCSRCS). The C2HC pre-PHD-type zinc-finger motif lies at 772 to 805 (EEDCCLCSLRGGALQRANDDRWVHVSCAVAILEA). A PHD-type 2 zinc finger spans residues 828–885 (LKCIFCKKRRKRTAGCCVQCSHGRCPTAFHVSCAQAAGVMMQPDDWPFVVFITCFRHK). Tudor domains lie at 897-954 (QSIT…CLQF) and 955-1011 (GPPA…EELP).

Belongs to the JHDM3 histone demethylase family. In terms of assembly, interacts with histone deacetylase proteins HDAC1, HDAC2 and HDAC3. Interacts with RB and NCOR1. Interacts with VRK1. Fe(2+) serves as cofactor. Ubiquitinated by RNF8 and RNF168, leading to its degradation. Degradation promotes accessibility of H4K20me2 mark for DNA repair protein TP53BP1, which is then recruited. Also ubiquitinated by the SCF(FBXO22) complex; leading to proteasomal degradation.

Its subcellular location is the nucleus. It carries out the reaction N(6),N(6),N(6)-trimethyl-L-lysyl(9)-[histone H3] + 2 2-oxoglutarate + 2 O2 = N(6)-methyl-L-lysyl(9)-[histone H3] + 2 formaldehyde + 2 succinate + 2 CO2. It catalyses the reaction N(6),N(6),N(6)-trimethyl-L-lysyl(36)-[histone H3] + 2 2-oxoglutarate + 2 O2 = N(6)-methyl-L-lysyl(36)-[histone H3] + 2 formaldehyde + 2 succinate + 2 CO2. Functionally, histone demethylase that specifically demethylates 'Lys-9' and 'Lys-36' residues of histone H3, thereby playing a central role in histone code. Does not demethylate histone H3 'Lys-4', H3 'Lys-27' nor H4 'Lys-20'. Demethylates trimethylated H3 'Lys-9' and H3 'Lys-36' residue, while it has no activity on mono- and dimethylated residues. Demethylation of Lys residue generates formaldehyde and succinate. Participates in transcriptional repression of ASCL2 and E2F-responsive promoters via the recruitment of histone deacetylases and NCOR1, respectively. This chain is Lysine-specific demethylase 4A (KDM4A), found in Pongo abelii (Sumatran orangutan).